A 1176-amino-acid chain; its full sequence is Pesticidal crystal protein Cry1Ag (1176 aa).

The protein belongs to the delta endotoxin family.

Promotes colloidosmotic lysis by binding to the midgut epithelial cells of many lepidopteran larvae. The sequence is that of Pesticidal crystal protein Cry1Ag (cry1Ag) from Bacillus thuringiensis.